The sequence spans 366 residues: MDSVLRYVFLLLAMTSFYMMYISLFNNGFFNLLSHQLATRALPGESDIALLSEYTGLKAFDGILESIVIFFWPISQGHHVGLSLTGLSFSGGMVGIWMIVVVHICRIRSFTRGMVITLIVGIAQQAVGPGIVIPCYFALTSRARPPNKNLHLTGTYSTSNHGLVVSMIMSYIFPLVIMSLPAPAMISPHSKQQVIAAWQGWPVYFVIIMTTHHLFINRGHRKEASARRQVLSVYHFGFACSCLCHMAWLSAFVASKIQSLSQSSNFWYLCPYGVAFPLLNQPAQRLGALEAGLFTFLQWDYCVAAAATMVWSTDRYIQECHRAELEIDKFRLILRLLGWILIDGPSATAVRLIWESEGPSYLQNPN.

Transmembrane regions (helical) follow at residues 9–29 (FLLL…NNGF), 84–104 (LTGL…VVHI), 113–133 (GMVI…GIVI), 162–182 (GLVV…SLPA), 195–215 (IAAW…HHLF), 233–253 (VYHF…SAFV), 291–311 (AGLF…TMVW), and 333–353 (ILRL…VRLI).

It belongs to the membrane-bound ascI terpene cyclase family.

The protein resides in the membrane. Its function is as follows. Aflatrem synthesis protein A; part of the ATM2 gene cluster that mediates the biosynthesis of aflatrem, a tremorgenic mycotoxin with acute neurotoxic effects. Synthesis of geranylgeranyl diphosphate (GGPP) by AtmG (a GGPP synthase) precedes condensation of GGPP with indole 3-glycerol phosphate, followed by epoxidation and cyclization by AtmM (a FAD-dependent monooxygenase) and AtmC (a prenyltransferase) to produce paspaline. AtmB is also essential for paspaline production, but its exact role has not been identified yet. AtmP, a cytochrome P450 monooxygenase, subsequently converts paspaline to 13-desoxypaxilline via PC-M6 by removal of the C-30 methyl group and oxidation at C-10. AtmQ, a cytochrome P450 monooxygenase, then catalyzes the oxidation of 13-desoxypaxilline, first at C-7 to produce paspalicine and then at C-13 to form paspalinine. Finally, AtmD prenylates paspalinine to form aflatrem. The role of atmA in the aflatrem biosynthesis is still unknown. The sequence is that of Terpene cyclase atmA from Aspergillus flavus.